The following is a 195-amino-acid chain: Meiotically up-regulated gene 84 protein (195 aa).

Residues M1 to Y84 lie on the Cytoplasmic side of the membrane. A helical transmembrane segment spans residues Y85 to L105. The Lumenal portion of the chain corresponds to T106–R122. Residues W123–L143 traverse the membrane as a helical segment. The Cytoplasmic segment spans residues N144–T195.

It is found in the endoplasmic reticulum membrane. In terms of biological role, has a role in meiosis. In Schizosaccharomyces pombe (strain 972 / ATCC 24843) (Fission yeast), this protein is Meiotically up-regulated gene 84 protein (mug84).